The primary structure comprises 458 residues: O-acyltransferase WSD (458 aa).

The active-site Proton acceptor is histidine 133.

Belongs to the long-chain O-acyltransferase family.

It catalyses the reaction a long chain fatty alcohol + a fatty acyl-CoA = a wax ester + CoA. The catalysed reaction is an acyl-CoA + a 1,2-diacyl-sn-glycerol = a triacyl-sn-glycerol + CoA. The protein operates within glycerolipid metabolism; triacylglycerol biosynthesis. Its function is as follows. Bifunctional wax ester synthase/diacylglycerol acyltransferase (WS and DGAT). Catalyzes the terminal and only committed step in triacylglycerol synthesis by using diacylglycerol and fatty acyl CoA as substrates. Required for storage lipid synthesis. WS uses C(12)-CoA to C(18)-CoA substrates whereas DGAT prefers C(20)-CoA. Upon expression in E.coli and Pseudomonas citronellolis (DSM 50332) both WS and DGAT activities increase. The chain is O-acyltransferase WSD (wax-dgaT) from Acinetobacter baylyi (strain ATCC 33305 / BD413 / ADP1).